Consider the following 387-residue polypeptide: Trichocyst matrix protein T2-C (387 aa).

An N-terminal signal peptide occupies residues 1–19 (MKTIILALALIVLASSTQA). The propeptide occupies 20-48 (DVIATIKKIDQSPFGRTLFDTIWLELQTG). The stretch at 51 to 163 (LDRLLQTLTD…KVLEHQEATA (113 aa)) forms a coiled coil. The propeptide occupies 184-239 (KGKATKQPAHKFTKEVASMIQKHFTTSAKKAAKFQHRKGYSKLFKAFATIASKVEQ). Positions 294-333 (TALANAQSDLAALNDVIAQVEASLDTTNQRIENVSADRND) form a coiled coil.

This sequence belongs to the TMP family. Post-translationally, two components are produced by post-translational processing from the precursor peptide.

Its subcellular location is the trichocyst. Structural protein that crystallize inside the trichocyst matrix. In Paramecium tetraurelia, this protein is Trichocyst matrix protein T2-C (T2C).